A 333-amino-acid polypeptide reads, in one-letter code: Electron transfer flavoprotein subunit alpha, mitochondrial (333 aa).

The N-terminal 19 residues, Met1–Phe19, are a transit peptide targeting the mitochondrion. The segment at Gln20–Leu204 is domain I. Residue Lys59 is modified to N6-acetyllysine; alternate. Lys59 carries the post-translational modification N6-succinyllysine; alternate. N6-acetyllysine is present on Lys62. Lys69 is modified (N6-acetyllysine; alternate). Position 69 is an N6-succinyllysine; alternate (Lys69). Lys75 is subject to N6-acetyllysine. Lys85 bears the N6-acetyllysine; alternate mark. Lys85 is modified (N6-succinyllysine; alternate). Thr93 carries the phosphothreonine modification. Residues Lys101 and Lys139 each carry the N6-acetyllysine modification. Ser140 bears the Phosphoserine mark. At Lys158 the chain carries N6-acetyllysine; alternate. Lys158 carries the N6-succinyllysine; alternate modification. Residue Lys164 is modified to N6-acetyllysine. Position 187 is an N6-succinyllysine (Lys187). Lys203 is modified (N6-acetyllysine; alternate). An N6-succinyllysine; alternate modification is found at Lys203. The segment at Thr205–Lys333 is domain II. Lys216 carries the N6-succinyllysine modification. Arg223 is an FAD binding site. Lys226 and Lys232 each carry N6-acetyllysine; alternate. 2 positions are modified to N6-succinyllysine; alternate: Lys226 and Lys232. FAD contacts are provided by residues Ser248, Val263–Thr266, Ser281–His286, and Asn300. N6-succinyllysine is present on Lys301. Asp318–Leu319 contributes to the FAD binding site.

It belongs to the ETF alpha-subunit/FixB family. In terms of assembly, heterodimer composed of ETFA and ETFB. Identified in a complex that contains ETFA, ETFB and ETFRF1. Interaction with ETFRF1 promotes dissociation of the bound FAD and loss of electron transfer activity. Interacts with TASOR. FAD is required as a cofactor.

The protein resides in the mitochondrion matrix. Its function is as follows. Heterodimeric electron transfer flavoprotein that accepts electrons from several mitochondrial dehydrogenases, including acyl-CoA dehydrogenases, glutaryl-CoA and sarcosine dehydrogenase. It transfers the electrons to the main mitochondrial respiratory chain via ETF-ubiquinone oxidoreductase (ETF dehydrogenase). Required for normal mitochondrial fatty acid oxidation and normal amino acid metabolism. The polypeptide is Electron transfer flavoprotein subunit alpha, mitochondrial (ETFA) (Bos taurus (Bovine)).